Consider the following 238-residue polypeptide: Transcription factor MYB27 (238 aa).

HTH myb-type domains lie at 6–58 (EETL…MNYL) and 59–113 (NPTL…RKKQ). The short motif at 31–38 (ERRWDSLA) is the Nuclear localization signal element. 2 consecutive DNA-binding regions (H-T-H motif) follow at residues 34-58 (WDSL…MNYL) and 86-109 (WSKI…RTHY).

The protein resides in the nucleus. In Arabidopsis thaliana (Mouse-ear cress), this protein is Transcription factor MYB27.